Reading from the N-terminus, the 146-residue chain is VHLTGEEKSAVTALWGKVNVDDVGGEALGRLLVVYPWTQRFFESFGDLSSPSAVMGNPKVKAHGKKVLSAFSDGLNHLDNLKGTFAKLSELHCDKLHVDPENFRLLGNVLVVVLAHHFGKDFTPQVQSAYQKVVAGVANALAHKYH.

Val-1 is subject to N-acetylvaline. Positions 2–146 constitute a Globin domain; the sequence is HLTGEEKSAV…VANALAHKYH (145 aa). Thr-12 is modified (phosphothreonine). The residue at position 44 (Ser-44) is a Phosphoserine. N6-acetyllysine is present on Lys-59. A heme b-binding site is contributed by His-63. Lys-82 is modified (N6-acetyllysine). Position 92 (His-92) interacts with heme b. The residue at position 93 (Cys-93) is an S-nitrosocysteine. Lys-144 is subject to N6-acetyllysine.

The protein belongs to the globin family. As to quaternary structure, heterotetramer of two alpha chains and two beta chains. In terms of tissue distribution, red blood cells.

Involved in oxygen transport from the lung to the various peripheral tissues. This is Hemoglobin subunit beta (HBB) from Nycticebus coucang (Slow loris).